We begin with the raw amino-acid sequence, 87 residues long: Omega-lycotoxin-Am1g (87 aa).

The first 17 residues, Met1–Cys17, serve as a signal peptide directing secretion. The propeptide occupies Gln18 to Arg40. 4 cysteine pairs are disulfide-bonded: Cys44–Cys59, Cys51–Cys64, Cys58–Cys84, and Cys66–Cys82.

This sequence belongs to the neurotoxin omega-lctx family. Expressed by the venom gland.

It localises to the secreted. Functionally, modulates Cav2.1/CACNA1A voltage-gated calcium channels (P/Q-type currents) in rat cerebellar Purkinje cells and hippocampal CA1-CA3 neurons. At saturating concentrations (&gt;10 nM) decelerates activation kinetics and slightly increases peak amplitude without affecting deactivation kinetics. In vivo, does not cause death when intravenously injected into mice. In rat models, through its activity on Cav2.1/CACNA1A, has an ameliorative effect on memory defects provoked by hyperstimulation of N-methyl-D-aspartate receptors (NMDARs) in the hippocampus. The protein is Omega-lycotoxin-Am1g of Alopecosa marikovskyi (Wolf spider).